We begin with the raw amino-acid sequence, 283 residues long: Polyamine aminopropyltransferase (283 aa).

The PABS domain occupies 2–237 (ELWYTEEHTD…GHWLFGFASK (236 aa)). Glutamine 31 lines the S-methyl-5'-thioadenosine pocket. Residues histidine 62 and aspartate 86 each coordinate spermidine. Residues glutamate 106 and 137–138 (DG) contribute to the S-methyl-5'-thioadenosine site. Aspartate 155 functions as the Proton acceptor in the catalytic mechanism. Position 155–158 (155–158 (DSTD)) interacts with spermidine. S-methyl-5'-thioadenosine is bound at residue proline 162.

Belongs to the spermidine/spermine synthase family. As to quaternary structure, homodimer or homotetramer.

Its subcellular location is the cytoplasm. It carries out the reaction S-adenosyl 3-(methylsulfanyl)propylamine + putrescine = S-methyl-5'-thioadenosine + spermidine + H(+). It functions in the pathway amine and polyamine biosynthesis; spermidine biosynthesis; spermidine from putrescine: step 1/1. Functionally, catalyzes the irreversible transfer of a propylamine group from the amino donor S-adenosylmethioninamine (decarboxy-AdoMet) to putrescine (1,4-diaminobutane) to yield spermidine. In Clostridium perfringens (strain 13 / Type A), this protein is Polyamine aminopropyltransferase.